The chain runs to 481 residues: Dynein axonemal assembly factor 8 (481 aa).

Disordered regions lie at residues 70-91, 131-233, 306-397, and 415-454; these read DESG…LVPG, LDTK…EGRP, TWKV…PVAS, and RAFR…KKHI. Phosphoserine is present on residues Ser-83, Ser-145, and Ser-147. Over residues 144–155 the composition is skewed to polar residues; the sequence is GSQSPPWSSQGE. A compositionally biased stretch (basic and acidic residues) spans 163-176; the sequence is GKLKTEPSDTDFKN. Residues 177 to 188 are compositionally biased toward basic residues; it reads SAKRRALRRERR. Residues 198–211 show a composition bias toward polar residues; it reads KVTQAAQNPASGDQ. A compositionally biased stretch (basic and acidic residues) spans 310–322; it reads SADKLQDTEEQVA. The segment covering 323–336 has biased composition (polar residues); sequence RTRSASAESGFQTE. Ser-328 carries the phosphoserine modification. 2 stretches are compositionally biased toward basic and acidic residues: residues 337 to 349 and 359 to 380; these read RVQK…RLKT and RLTE…HSSS.

It localises to the dynein axonemal particle. Its subcellular location is the cytoplasm. Functionally, in cyliated cells, dynein axonemal particle-specific protein required for deployment of ODA to the axoneme. Interacts with outer dynein arm (ODA) subunits. The sequence is that of Dynein axonemal assembly factor 8 (Dnaaf8) from Rattus norvegicus (Rat).